Reading from the N-terminus, the 454-residue chain is Cell division cycle-associated 7-like protein (454 aa).

Residues 9–33 carry the Integrase domain-binding motif 1 (IBM1) motif; it reads IPKEVADIFNAPSDDEEFVGFRDDV. Serine 21 carries the phosphoserine modification. The short motif at 65 to 91 is the Integrase domain-binding motif 2 (IBM2) element; that stretch reads FTEELRRIFIEDTDSETEDFAGFTQSD. Position 77 is a phosphothreonine (threonine 77). The residue at position 79 (serine 79) is a Phosphoserine. Threonine 81 and threonine 88 each carry phosphothreonine. Disordered stretches follow at residues 103-169 and 188-213; these read VESD…LFSS and QVIQ…SSDA. A phosphoserine mark is found at serine 105, serine 108, serine 117, serine 138, serine 139, serine 162, serine 195, and serine 197. Positions 117–126 are enriched in acidic residues; sequence SEEEEDEEED. Positions 213–235 are MYC-binding; that stretch reads ALLKRTMNIKENKAMLAQLLAEL. Residues lysine 222 and lysine 225 each participate in a glycyl lysine isopeptide (Lys-Gly) (interchain with G-Cter in SUMO2) cross-link. The residue at position 261 (serine 261) is a Phosphoserine.

Interacts with MYC. Interacts (via IBM motifs) with PSIP1 (via IBD domain); phosphorylation increases its affinity for PSIP1. Post-translationally, phosphorylation increases its interaction with PSIP1. Ubiquitous. Overexpressed in medulloblastoma.

The protein localises to the cytoplasm. The protein resides in the nucleus. Its function is as follows. Plays a role in transcriptional regulation as a repressor that inhibits monoamine oxidase A (MAOA) activity and gene expression by binding to the promoter. Plays an important oncogenic role in mediating the full transforming effect of MYC in medulloblastoma cells. Involved in apoptotic signaling pathways; May act downstream of P38-kinase and BCL-2, but upstream of CASP3/caspase-3 as well as CCND1/cyclin D1 and E2F1. This chain is Cell division cycle-associated 7-like protein (CDCA7L), found in Homo sapiens (Human).